The chain runs to 503 residues: ATP synthase subunit alpha (503 aa).

Residue 170–177 (GDRQTGKT) coordinates ATP.

As to quaternary structure, F-type ATPases have 2 components, CF(1) - the catalytic core - and CF(0) - the membrane proton channel. CF(1) has five subunits: alpha(3), beta(3), gamma(1), delta(1), epsilon(1). CF(0) has four main subunits: a(1), b(1), b'(1) and c(9-12).

It localises to the cellular thylakoid membrane. The catalysed reaction is ATP + H2O + 4 H(+)(in) = ADP + phosphate + 5 H(+)(out). Inhibited by dicyclohexylcarbodiimide. Its function is as follows. Produces ATP from ADP in the presence of a proton gradient across the membrane. The alpha chain is a regulatory subunit. The complex from the organism is particularly stable to disruption and remains functional after 6 hrs at 55 degrees Celsius. This chain is ATP synthase subunit alpha, found in Thermosynechococcus vestitus (strain NIES-2133 / IAM M-273 / BP-1).